A 427-amino-acid polypeptide reads, in one-letter code: UDP-N-acetylglucosamine 1-carboxyvinyltransferase 1 (427 aa).

Residue 23–24 (KN) coordinates phosphoenolpyruvate. Residue Arg-96 coordinates UDP-N-acetyl-alpha-D-glucosamine. Cys-120 functions as the Proton donor in the catalytic mechanism. The residue at position 120 (Cys-120) is a 2-(S-cysteinyl)pyruvic acid O-phosphothioketal. Residues 125–129 (RPIDL), Asp-309, and Val-331 each bind UDP-N-acetyl-alpha-D-glucosamine.

This sequence belongs to the EPSP synthase family. MurA subfamily.

The protein localises to the cytoplasm. It catalyses the reaction phosphoenolpyruvate + UDP-N-acetyl-alpha-D-glucosamine = UDP-N-acetyl-3-O-(1-carboxyvinyl)-alpha-D-glucosamine + phosphate. It participates in cell wall biogenesis; peptidoglycan biosynthesis. Cell wall formation. Adds enolpyruvyl to UDP-N-acetylglucosamine. In Streptococcus pneumoniae serotype 4 (strain ATCC BAA-334 / TIGR4), this protein is UDP-N-acetylglucosamine 1-carboxyvinyltransferase 1.